We begin with the raw amino-acid sequence, 357 residues long: MLHILCQGTPFEIGYEHGSAAKAVIARSIDFAVDLIRGKTKKTDEELKQVLSQLGRVIEERWPKYYEEIRGIAKGAERDVSEIVMLNTRTEFAYGLKAARDGCTTAYCQLPNGALQGQNWDFFSATKENLIRLTIRQAGLPTIKFITEAGIIGKVGFNSAGVAVNYNALHLQGLRPTGVPSHIALRIALESTSPSQAYDRIVEQGGMAASAFIMVGNGHEAFGLEFSPTSIRKQVLDANGRMVHTNHCLLQHGKNEKELDPLPDSWNRHQRMEFLLDGFDGTKQAFAQLWADEDNYPFSICRAYEEGKSRGATLFNIIYDHARREATVRLGRPTNPDEMFVMRFDEEDERSALNARL.

Positions 121 and 310 each coordinate 6-aminopenicillanate.

Belongs to the peptidase C45 family. As to quaternary structure, the active form of the enzyme results from processing of the 40-kDa monomeric precursor to a heterodimer containing subunits of 11 and 29 kDa. Post-translationally, the pre-AAT protein is synthesized as 40 kDa precursor which is then self-processed into an 11 kDa (protein A) and a 29 kDa (protein B). The B protein carries AAT activity.

The protein resides in the peroxisome matrix. The enzyme catalyses isopenicillin N + phenylacetyl-CoA + H2O = penicillin G + L-2-aminoadipate + CoA + H(+). It functions in the pathway antibiotic biosynthesis; penicillin G biosynthesis; penicillin G from L-alpha-aminoadipate and L-cysteine and L-valine: step 3/3. In terms of biological role, isopenicillin-N N-acyltransferase; part of the gene cluster that mediates the biosynthesis of penicillin, the world's most important antibiotic. AatA catalyzes the exchange of the alpha-aminoadipyl side chain of isopenicillin N for phenylacetic acid to yield penicillin. This step occurs in the peroxisomal matrix and the penM and paaT transporters are involved in the isopenicillin N and phenylacetic acid import into the peroxisome, respectively. The penicillin biosynthesis occurs via 3 enzymatic steps, the first corresponding to the production of the tripeptide N-[(5S)-5-amino-5-carboxypentanoyl]-L-cysteinyl-D-valine (LLD-ACV or ACV) by the NRPS acvA. The tripeptide ACV is then cyclized to isopenicillin N (IPN) by the isopenicillin N synthase ipnA that forms the beta-lactam nucleus. Finally, the alpha-aminoadipyl side chain is exchanged for phenylacetic acid by the isopenicillin N acyltransferase aatA to yield penicillin in the peroxisomal matrix. The polypeptide is Isopenicillin-N N-acyltransferase (Penicillium chrysogenum (Penicillium notatum)).